A 362-amino-acid chain; its full sequence is Phosphoserine aminotransferase (362 aa).

2 residues coordinate L-glutamate: S9 and R42. Pyridoxal 5'-phosphate is bound by residues 76–77, W102, T153, D174, and Q197; that span reads GR. Position 198 is an N6-(pyridoxal phosphate)lysine (K198). Pyridoxal 5'-phosphate is bound at residue 239 to 240; it reads NT.

The protein belongs to the class-V pyridoxal-phosphate-dependent aminotransferase family. SerC subfamily. As to quaternary structure, homodimer. Pyridoxal 5'-phosphate serves as cofactor.

It localises to the cytoplasm. The catalysed reaction is O-phospho-L-serine + 2-oxoglutarate = 3-phosphooxypyruvate + L-glutamate. It carries out the reaction 4-(phosphooxy)-L-threonine + 2-oxoglutarate = (R)-3-hydroxy-2-oxo-4-phosphooxybutanoate + L-glutamate. It functions in the pathway amino-acid biosynthesis; L-serine biosynthesis; L-serine from 3-phospho-D-glycerate: step 2/3. It participates in cofactor biosynthesis; pyridoxine 5'-phosphate biosynthesis; pyridoxine 5'-phosphate from D-erythrose 4-phosphate: step 3/5. Its function is as follows. Catalyzes the reversible conversion of 3-phosphohydroxypyruvate to phosphoserine and of 3-hydroxy-2-oxo-4-phosphonooxybutanoate to phosphohydroxythreonine. This chain is Phosphoserine aminotransferase, found in Escherichia fergusonii (strain ATCC 35469 / DSM 13698 / CCUG 18766 / IAM 14443 / JCM 21226 / LMG 7866 / NBRC 102419 / NCTC 12128 / CDC 0568-73).